A 435-amino-acid polypeptide reads, in one-letter code: Trigger factor (435 aa).

Residues 162-247 (GDRINIDYRG…LSGVESSKLP (86 aa)) enclose the PPIase FKBP-type domain.

This sequence belongs to the FKBP-type PPIase family. Tig subfamily.

The protein resides in the cytoplasm. It catalyses the reaction [protein]-peptidylproline (omega=180) = [protein]-peptidylproline (omega=0). In terms of biological role, involved in protein export. Acts as a chaperone by maintaining the newly synthesized protein in an open conformation. Functions as a peptidyl-prolyl cis-trans isomerase. In Nitrosospira multiformis (strain ATCC 25196 / NCIMB 11849 / C 71), this protein is Trigger factor.